The following is a 290-amino-acid chain: Shikimate dehydrogenase (NADP(+)) (290 aa).

Shikimate-binding positions include 24–26 and Thr-71; that span reads SLS. Lys-75 (proton acceptor) is an active-site residue. Positions 96 and 111 each coordinate shikimate. NADP(+) contacts are provided by residues 136 to 140, 160 to 165, and Leu-233; these read GAGGA and NRTVDR. Residue Tyr-235 coordinates shikimate. Gly-256 is an NADP(+) binding site.

This sequence belongs to the shikimate dehydrogenase family. In terms of assembly, homodimer.

The enzyme catalyses shikimate + NADP(+) = 3-dehydroshikimate + NADPH + H(+). It participates in metabolic intermediate biosynthesis; chorismate biosynthesis; chorismate from D-erythrose 4-phosphate and phosphoenolpyruvate: step 4/7. Involved in the biosynthesis of the chorismate, which leads to the biosynthesis of aromatic amino acids. Catalyzes the reversible NADPH linked reduction of 3-dehydroshikimate (DHSA) to yield shikimate (SA). This chain is Shikimate dehydrogenase (NADP(+)), found in Methanopyrus kandleri (strain AV19 / DSM 6324 / JCM 9639 / NBRC 100938).